We begin with the raw amino-acid sequence, 632 residues long: Probable potassium transport system protein Kup 3 (632 aa).

12 consecutive transmembrane segments (helical) span residues 17–37, 60–80, 106–126, 144–164, 175–195, 210–230, 254–274, 292–312, 344–364, 370–390, 401–421, and 426–446; these read LFYL…TSPL, LISL…VLFL, TAIL…DAMI, PSLS…LFVV, FFGP…ISHI, AVSF…AVFL, WFLL…ALVL, ALLP…QAVI, IFVP…VLSF, LATA…IMAF, LPLA…FLGA, and IHDG…IMWT.

The protein belongs to the HAK/KUP transporter (TC 2.A.72) family.

It localises to the cell inner membrane. It catalyses the reaction K(+)(in) + H(+)(in) = K(+)(out) + H(+)(out). Functionally, transport of potassium into the cell. Likely operates as a K(+):H(+) symporter. This chain is Probable potassium transport system protein Kup 3, found in Rhizobium etli (strain ATCC 51251 / DSM 11541 / JCM 21823 / NBRC 15573 / CFN 42).